The sequence spans 562 residues: Arginine--tRNA ligase 2 (562 aa).

Positions 122-132 (PNIAKPFSMGH) match the 'HIGH' region motif.

This sequence belongs to the class-I aminoacyl-tRNA synthetase family. Monomer.

It is found in the cytoplasm. It catalyses the reaction tRNA(Arg) + L-arginine + ATP = L-arginyl-tRNA(Arg) + AMP + diphosphate. This Bacillus anthracis protein is Arginine--tRNA ligase 2 (argS2).